The sequence spans 345 residues: uncharacterized protein (345 aa).

8 helical membrane passes run 9–31, 84–103, 116–138, 148–170, 182–204, 269–286, 291–308, and 313–335; these read VVAF…AAFV, TLVA…TYLL, YFSL…ILYT, VPMQ…SGIF, VVFV…TIHA, WFFW…GVLG, ISHY…IAGY, and HGLT…VFFI.

Its subcellular location is the cell membrane. This is an uncharacterized protein from Treponema pallidum (strain Nichols).